A 68-amino-acid chain; its full sequence is Protein transport protein Sec61 subunit gamma (68 aa).

Topologically, residues 1–32 (MDQIMQFVEPSRQFVKDSIRLVKRCTKPDRKE) are cytoplasmic. The helical transmembrane segment at 33-61 (FQKIAMATAIGFAIMGFIGFFVKLIHIPI) threads the bilayer. Residues 62–68 (NNIIVGG) are Extracellular-facing.

It belongs to the SecE/SEC61-gamma family. The SEC61 channel-forming translocon complex consists of channel-forming core components SEC61A1, SEC61B and SEC61G and different auxiliary components such as SEC62 and SEC63. The SEC61 channel associates with the multi-pass translocon (MPT) complex.

The protein resides in the endoplasmic reticulum membrane. Functionally, component of SEC61 channel-forming translocon complex that mediates transport of signal peptide-containing precursor polypeptides across the endoplasmic reticulum (ER). Forms a ribosome receptor and a gated pore in the ER membrane, both functions required for cotranslational translocation of nascent polypeptides. The SEC61 channel is also involved in ER membrane insertion of transmembrane proteins: it mediates membrane insertion of the first few transmembrane segments of proteins, while insertion of subsequent transmembrane regions of multi-pass membrane proteins is mediated by the multi-pass translocon (MPT) complex. The chain is Protein transport protein Sec61 subunit gamma (sec61g) from Gadus morhua (Atlantic cod).